The following is a 375-amino-acid chain: Growth/differentiation factor 8 (375 aa).

Residues 1–23 form the signal peptide; it reads MQKLQLCVYIYLFMLIVAGPVDL. The propeptide occupies 24 to 266; the sequence is NENSEQKENV…VTDTPKRSRR (243 aa). Residue Asn-71 is glycosylated (N-linked (GlcNAc...) asparagine). Disulfide bonds link Cys-272–Cys-282, Cys-281–Cys-340, Cys-309–Cys-372, and Cys-313–Cys-374.

Belongs to the TGF-beta family. Homodimer; disulfide-linked. Interacts with WFIKKN2, leading to inhibit its activity. Interacts with FST3. Synthesized as large precursor molecule that undergoes proteolytic cleavage to generate an N-terminal propeptide and a disulfide linked C-terminal dimer, which is the biologically active molecule. The circulating form consists of a latent complex of the C-terminal dimer and other proteins, including its propeptide, which maintain the C-terminal dimer in a latent, inactive state. Ligand activation requires additional cleavage of the prodomain by a tolloid-like metalloproteinase.

Its subcellular location is the secreted. Functionally, acts specifically as a negative regulator of skeletal muscle growth. The polypeptide is Growth/differentiation factor 8 (MSTN) (Homo sapiens (Human)).